Here is a 377-residue protein sequence, read N- to C-terminus: Ribosomal RNA large subunit methyltransferase G (377 aa).

This sequence belongs to the methyltransferase superfamily. RlmG family.

It is found in the cytoplasm. It carries out the reaction guanosine(1835) in 23S rRNA + S-adenosyl-L-methionine = N(2)-methylguanosine(1835) in 23S rRNA + S-adenosyl-L-homocysteine + H(+). Functionally, specifically methylates the guanine in position 1835 (m2G1835) of 23S rRNA. This Aeromonas salmonicida (strain A449) protein is Ribosomal RNA large subunit methyltransferase G.